A 187-amino-acid chain; its full sequence is UPF0301 protein Cpha266_0885 (187 aa).

It belongs to the UPF0301 (AlgH) family.

This is UPF0301 protein Cpha266_0885 from Chlorobium phaeobacteroides (strain DSM 266 / SMG 266 / 2430).